A 327-amino-acid chain; its full sequence is DNA-directed RNA polymerase subunit alpha (327 aa).

The alpha N-terminal domain (alpha-NTD) stretch occupies residues methionine 1–arginine 233. Residues phenylalanine 247–lysine 327 form an alpha C-terminal domain (alpha-CTD) region.

Belongs to the RNA polymerase alpha chain family. Homodimer. The RNAP catalytic core consists of 2 alpha, 1 beta, 1 beta' and 1 omega subunit. When a sigma factor is associated with the core the holoenzyme is formed, which can initiate transcription.

The enzyme catalyses RNA(n) + a ribonucleoside 5'-triphosphate = RNA(n+1) + diphosphate. In terms of biological role, DNA-dependent RNA polymerase catalyzes the transcription of DNA into RNA using the four ribonucleoside triphosphates as substrates. The sequence is that of DNA-directed RNA polymerase subunit alpha from Baumannia cicadellinicola subsp. Homalodisca coagulata.